The chain runs to 229 residues: UPF0173 metal-dependent hydrolase SAR1785 (229 aa).

The protein belongs to the UPF0173 family.

The protein is UPF0173 metal-dependent hydrolase SAR1785 of Staphylococcus aureus (strain MRSA252).